The chain runs to 480 residues: UDP-glucose 6-dehydrogenase 4 (480 aa).

Residues 8–13 (GAGYVG), Asp33, Arg38, 86–90 (VNTPT), 127–128 (ST), and Glu161 each bind NAD(+). Substrate contacts are provided by residues 157 to 161 (EFLAE), 216 to 223 (KLAANAFL), and 256 to 269 (RIGP…VGFG). Residue Cys272 is the Nucleophile of the active site. Residue 272 to 275 (CFQK) participates in NAD(+) binding. 334–335 (FK) serves as a coordination point for substrate. Arg342 contributes to the NAD(+) binding site. Ser393 bears the Phosphoserine mark. Arg447 is a binding site for substrate.

This sequence belongs to the UDP-glucose/GDP-mannose dehydrogenase family.

It carries out the reaction UDP-alpha-D-glucose + 2 NAD(+) + H2O = UDP-alpha-D-glucuronate + 2 NADH + 3 H(+). Its pathway is nucleotide-sugar biosynthesis; UDP-alpha-D-glucuronate biosynthesis; UDP-alpha-D-glucuronate from UDP-alpha-D-glucose: step 1/1. Its function is as follows. Involved in the biosynthesis of UDP-glucuronic acid (UDP-GlcA), providing nucleotide sugars for cell-wall polymers. The chain is UDP-glucose 6-dehydrogenase 4 (UGD4) from Oryza sativa subsp. japonica (Rice).